The primary structure comprises 724 residues: Solute carrier organic anion transporter family member 4C1 (724 aa).

Residues 1 to 105 are Cytoplasmic-facing; sequence MKSAKGIENL…QCLQRCNTPG (105 aa). A phosphoserine mark is found at S15, S16, S24, S26, and S28. The disordered stretch occupies residues 30–71; sequence IEVSALSSDPQRENSQPQELQKPQEPQKSPEPSLPSAPPNVS. Low complexity predominate over residues 44-60; it reads SQPQELQKPQEPQKSPE. A helical transmembrane segment spans residues 106–126; sequence GFLLHYCLLAVTQGIVVNGLV. The Extracellular portion of the chain corresponds to 127–145; that stretch reads NISISTVEKRYEMKSSLTG. A helical transmembrane segment spans residues 146–166; that stretch reads LISSSYDISFCLLSLFVSFFG. Residues 167–172 lie on the Cytoplasmic side of the membrane; it reads ERGHKP. A helical membrane pass occupies residues 173-197; the sequence is RWLAFAAFMIGLGALVFSLPQFFSG. The Extracellular portion of the chain corresponds to 198–223; it reads EYKLGSLFEDTCVTTRNSTSCTSSTS. Residues 224–254 traverse the membrane as a helical segment; the sequence is SLSNYLYVFILGQLLLGAGGTPLYTLGTAFL. Over 255–274 the chain is Cytoplasmic; sequence DDSVPTHKSSLYIGTGYAMS. Residues 275–295 form a helical membrane-spanning segment; it reads ILGPAIGYVLGGQLLTIYIDV. The Extracellular segment spans residues 296-311; it reads AMGESTDVTEDDPRWL. The helical transmembrane segment at 312–336 threads the bilayer; that stretch reads GAWWIGFLLSWIFAWSLIIPFSCFP. Residues 337–377 lie on the Cytoplasmic side of the membrane; the sequence is KHLPGTAEIQAGKTSQAHQSNSNADVKFGKSIKDFPAALKN. The chain crosses the membrane as a helical span at residues 378–399; it reads LMKNAVFMCLVLSTSSEALITT. Over 400-419 the chain is Extracellular; that stretch reads GFATFLPKFIENQFGLTSSF. Residues 420–443 traverse the membrane as a helical segment; sequence AATLGGAVLIPGAALGQILGGFLV. Topologically, residues 444-447 are cytoplasmic; that stretch reads SKFR. A helical transmembrane segment spans residues 448–471; it reads MTCKNTMKFALFTSGVALTLSFVF. At 472-580 the chain is on the extracellular side; sequence MYAKCENEPF…ETHCAKLPIF (109 aa). One can recognise a Kazal-like domain in the interval 495-549; that stretch reads GNLIAPCNANCNCSRSYYYPVCGDGVQYFSPCFAGCSNPVAHRKPKVYYNCSCIE. Disulfide bonds link C501-C530, C507-C526, and C516-C547. The helical transmembrane segment at 581 to 603 threads the bilayer; that stretch reads LCIFFIVIIFTFMAGTPITVSIL. The Cytoplasmic segment spans residues 604–612; sequence RCVNHRQRS. Residues 613-638 traverse the membrane as a helical segment; that stretch reads LALGIQFMVLRLLGTIPGPIIFGFTI. Topologically, residues 639 to 672 are extracellular; sequence DSTCILWDINDCGIKGACWIYDNIKMAHMLVAIS. The helical transmembrane segment at 673–690 threads the bilayer; that stretch reads VTCKVITMFFNGFAIFLY. The Cytoplasmic portion of the chain corresponds to 691–724; that stretch reads KPPPSATDVSFHKENAVVTNVLAEQDLNKIVKEG.

Belongs to the organo anion transporter (TC 2.A.60) family. Predominantly expressed in kidney but also weakly expressed in both fetal liver and kidney.

The protein resides in the basolateral cell membrane. The catalysed reaction is estrone 3-sulfate(out) = estrone 3-sulfate(in). It carries out the reaction L-thyroxine(out) = L-thyroxine(in). The enzyme catalyses 3,3',5-triiodo-L-thyronine(out) = 3,3',5-triiodo-L-thyronine(in). It catalyses the reaction chenodeoxycholate(out) = chenodeoxycholate(in). The catalysed reaction is glycocholate(out) = glycocholate(in). It carries out the reaction L-homoarginine(in) = L-homoarginine(out). The enzyme catalyses L-arginine(in) = L-arginine(out). It catalyses the reaction N(omega),N(omega)-dimethyl-L-arginine(out) = N(omega),N(omega)-dimethyl-L-arginine(in). Functionally, mediates the transport of organic anions such as steroids (estrone 3-sulfate, chenodeoxycholate, glycocholate) and thyroid hormones (3,3',5-triiodo-L-thyronine (T3), L-thyroxine (T4)), in the kidney. Capable of transporting cAMP and pharmacological substances such as digoxin, ouabain and methotrexate. Transport is independent of sodium, chloride ion, and ATP. Transport activity is stimulated by an acidic extracellular environment due to increased substrate affinity to the transporter. The driving force for this transport activity is currently not known. The role of hydrogencarbonate (HCO3(-), bicarbonate) as the probable counteranion that exchanges for organic anions is still not well defined. Functions as an uptake transporter at the apical membrane, suggesting a role in renal reabsorption. Involved in the renal secretion of the uremic toxin ADMA (N(omega),N(omega)-dimethyl-L-arginine or asymmetrical dimethylarginine), which is associated to cardiovascular events and mortality, and the structurally related amino acids L-arginine and L-homoarginine (a cardioprotective biomarker). Can act bidirectionally, suggesting a dual protective role of this transport protein; exporting L-homoarginine after being synthesized in proximal tubule cells, and mediating uptake of ADMA from the blood into proximal tubule cells where it is degraded by the enzyme dimethylarginine dimethylaminohydrolase 1 (DDAH1). May be involved in sperm maturation by enabling directed movement of organic anions and compounds within or between cells. This ion-transporting process is important to maintain the strict epididymal homeostasis necessary for sperm maturation. May have a role in secretory functions since seminal vesicle epithelial cells are assumed to secrete proteins involved in decapacitation by modifying surface proteins to facilitate the acquisition of the ability to fertilize the egg. The polypeptide is Solute carrier organic anion transporter family member 4C1 (Homo sapiens (Human)).